Consider the following 21-residue polypeptide: DYE-linked aldehyde dehydrogenase, gamma chain (21 aa).

Heterotetramer composed of an alpha, a beta and two gamma chains. The cofactor is [2Fe-2S] cluster.

In terms of biological role, active with aldehydes and formate esters as substrates. The polypeptide is DYE-linked aldehyde dehydrogenase, gamma chain (Amycolatopsis methanolica).